Reading from the N-terminus, the 357-residue chain is 3-isopropylmalate dehydrogenase (357 aa).

76–89 (GPQWDTIDPALRPE) contributes to the NAD(+) binding site. Positions 96, 106, 134, and 224 each coordinate substrate. Residues Asp224, Asp248, and Asp252 each contribute to the Mg(2+) site. 282-294 (GSAPDIAGQGVAN) lines the NAD(+) pocket.

This sequence belongs to the isocitrate and isopropylmalate dehydrogenases family. LeuB type 1 subfamily. Homodimer. Mg(2+) is required as a cofactor. Mn(2+) serves as cofactor.

The protein resides in the cytoplasm. It carries out the reaction (2R,3S)-3-isopropylmalate + NAD(+) = 4-methyl-2-oxopentanoate + CO2 + NADH. It functions in the pathway amino-acid biosynthesis; L-leucine biosynthesis; L-leucine from 3-methyl-2-oxobutanoate: step 3/4. In terms of biological role, catalyzes the oxidation of 3-carboxy-2-hydroxy-4-methylpentanoate (3-isopropylmalate) to 3-carboxy-4-methyl-2-oxopentanoate. The product decarboxylates to 4-methyl-2 oxopentanoate. In Xylella fastidiosa (strain 9a5c), this protein is 3-isopropylmalate dehydrogenase.